The following is a 563-amino-acid chain: MQDEIIDFFRSPALLFYMTLMLTICVVNGSQQVGEVVETEFHAYRLHQYEISGNIYGCKNYRVSYEAVSLGARTLRRTMVTTWRDLLTTDVDDMWALSTGAVLIFIPDNLDELNDIDRKAFIDLEAKLLSAKTDLAVYVAPFNDDAVSILHDVNTRSEKAPTALQHLLQSLSGNTISITSSDQSPELPPSYKPLNIVGRLSSGDRAAPTIAFVAHYDTQSAVPGVSPGADSNGSGIVALLELLAVLSKFYDSPSTRPPYNILFIWTAAGKLNYQGTRHWIDEYQKGFDSADYAKSGLSRKGFSDDRVDLAICIEAIGRKTGGFFMHAGKTPSENSVAAQLLRRLKYFSSISPKKNIELVTKKISLTTVSAWEHEKFNIKRMPAITLSTLPSPSDPARNSILDLPSALDEDELIDNIRLIGEAVLGYILDLPESGPSSDSRVKSEATMLSKDAVDKQRVHHFIRQFASRPRPVGDQRATESITSNLASVAAGYGNVFKSAVTITDAKAFGVTQNRLVAERVKPAVFELVIAAGVFTYLSAFYYIATHSQNTIEGTVAAIRKSIF.

The N-terminal stretch at 1–29 is a signal peptide; sequence MQDEIIDFFRSPALLFYMTLMLTICVVNG. Topologically, residues 30–522 are lumenal; that stretch reads SQQVGEVVET…NRLVAERVKP (493 aa). Asn232 carries N-linked (GlcNAc...) asparagine glycosylation. Residues 523–543 traverse the membrane as a helical segment; sequence AVFELVIAAGVFTYLSAFYYI. At 544 to 563 the chain is on the cytoplasmic side; the sequence is ATHSQNTIEGTVAAIRKSIF.

Belongs to the nicastrin family. As to quaternary structure, may interact with the levamisole-sensitive nicotinic acetylcholine receptor (L-AChR). May interact with nra-4 in the ER. Expressed in body wall, pharyngeal, and vulval muscles, excretory canal cell, head and motor neurons, and vulval epithelium.

It is found in the endoplasmic reticulum membrane. Involved in the recognition and selection of protein complexes to exit the endoplasmic reticulum (ER). In muscles, regulates levamisole-sensitive nicotinic acetylcholine receptor (L-AChR) subunit composition, possibly by allowing only specific L-AChR subunit combinations to exit the ER. Specifically, may promote the inclusion of alpha subunits unc-38 and unc-29 into L-AChR. Regulates L-AChR sensitivity to agonists such as nicotine and levamisole at neuro-muscular junctions. In touch neurons, may prevent ER exit of incorrectly folded mec-4-mec-10 ion channel. The sequence is that of Nicalin from Caenorhabditis elegans.